The chain runs to 567 residues: Membrane protein insertase YidC (567 aa).

A helical transmembrane segment spans residues 3–23; it reads IQRIVLFAGLAIVSYLMVLAW. Residues 32 to 80 are disordered; the sequence is TEQVAEAQSSSDSSATNSTDDMILPEDNNAGGEEFATPETGSLASTSAN. Over residues 40 to 52 the composition is skewed to low complexity; the sequence is SSSDSSATNSTDD. Positions 70–80 are enriched in polar residues; it reads ETGSLASTSAN. The next 5 helical transmembrane spans lie at 354–374, 378–398, 445–465, 485–505, and 522–542; these read FGWL…FYGL, WGVA…HLSA, GGCL…WVLF, MDPY…QMSL, and PLIF…YWLV.

It belongs to the OXA1/ALB3/YidC family. Type 1 subfamily. As to quaternary structure, interacts with the Sec translocase complex via SecD. Specifically interacts with transmembrane segments of nascent integral membrane proteins during membrane integration.

It is found in the cell inner membrane. Functionally, required for the insertion and/or proper folding and/or complex formation of integral membrane proteins into the membrane. Involved in integration of membrane proteins that insert both dependently and independently of the Sec translocase complex, as well as at least some lipoproteins. Aids folding of multispanning membrane proteins. This is Membrane protein insertase YidC from Marinobacter nauticus (strain ATCC 700491 / DSM 11845 / VT8) (Marinobacter aquaeolei).